Reading from the N-terminus, the 148-residue chain is MSIIDNRKAFFDYHIEERYEAGLVLEGWEVKALRAGRGQIKEGYVVVKNAEIFLIGTHISPLPEASTHIKPDPVRTRKLLLHRDEIKKLIGKVEQRGYTLVPLNFHYKGGRVKCEIGLAKGKKLHDKRETEKKRDWEREKARIMRSAT.

A disordered region spans residues 123-148 (KLHDKRETEKKRDWEREKARIMRSAT). Residues 126–142 (DKRETEKKRDWEREKAR) show a composition bias toward basic and acidic residues.

It belongs to the SmpB family.

It is found in the cytoplasm. Required for rescue of stalled ribosomes mediated by trans-translation. Binds to transfer-messenger RNA (tmRNA), required for stable association of tmRNA with ribosomes. tmRNA and SmpB together mimic tRNA shape, replacing the anticodon stem-loop with SmpB. tmRNA is encoded by the ssrA gene; the 2 termini fold to resemble tRNA(Ala) and it encodes a 'tag peptide', a short internal open reading frame. During trans-translation Ala-aminoacylated tmRNA acts like a tRNA, entering the A-site of stalled ribosomes, displacing the stalled mRNA. The ribosome then switches to translate the ORF on the tmRNA; the nascent peptide is terminated with the 'tag peptide' encoded by the tmRNA and targeted for degradation. The ribosome is freed to recommence translation, which seems to be the essential function of trans-translation. The polypeptide is SsrA-binding protein (Burkholderia thailandensis (strain ATCC 700388 / DSM 13276 / CCUG 48851 / CIP 106301 / E264)).